The sequence spans 118 residues: Holo-[acyl-carrier-protein] synthase (118 aa).

D8 and E58 together coordinate Mg(2+).

It belongs to the P-Pant transferase superfamily. AcpS family. The cofactor is Mg(2+).

It is found in the cytoplasm. It catalyses the reaction apo-[ACP] + CoA = holo-[ACP] + adenosine 3',5'-bisphosphate + H(+). Its function is as follows. Transfers the 4'-phosphopantetheine moiety from coenzyme A to a Ser of acyl-carrier-protein. The sequence is that of Holo-[acyl-carrier-protein] synthase from Streptococcus pyogenes serotype M5 (strain Manfredo).